Consider the following 82-residue polypeptide: RNA-binding protein Hfq (82 aa).

Residues 11–71 (DTFLNHVRKT…ISTIMPGAPI (61 aa)) form the Sm domain.

Belongs to the Hfq family. As to quaternary structure, homohexamer.

Functionally, RNA chaperone that binds small regulatory RNA (sRNAs) and mRNAs to facilitate mRNA translational regulation in response to envelope stress, environmental stress and changes in metabolite concentrations. Also binds with high specificity to tRNAs. This chain is RNA-binding protein Hfq, found in Rhodopseudomonas palustris (strain HaA2).